The chain runs to 79 residues: Acyl carrier protein (79 aa).

A Carrier domain is found at 2–77 (SEIGERVKKI…DAVKFLEKNA (76 aa)). Position 37 is an O-(pantetheine 4'-phosphoryl)serine (serine 37).

The protein belongs to the acyl carrier protein (ACP) family. Post-translationally, 4'-phosphopantetheine is transferred from CoA to a specific serine of apo-ACP by AcpS. This modification is essential for activity because fatty acids are bound in thioester linkage to the sulfhydryl of the prosthetic group.

It is found in the cytoplasm. It functions in the pathway lipid metabolism; fatty acid biosynthesis. Its function is as follows. Carrier of the growing fatty acid chain in fatty acid biosynthesis. This chain is Acyl carrier protein, found in Rhodopseudomonas palustris (strain BisA53).